We begin with the raw amino-acid sequence, 158 residues long: NADH-quinone oxidoreductase subunit B (158 aa).

C37, C38, C102, and C132 together coordinate [4Fe-4S] cluster.

The protein belongs to the complex I 20 kDa subunit family. As to quaternary structure, NDH-1 is composed of 14 different subunits. Subunits NuoB, C, D, E, F, and G constitute the peripheral sector of the complex. Requires [4Fe-4S] cluster as cofactor.

It is found in the cell inner membrane. It carries out the reaction a quinone + NADH + 5 H(+)(in) = a quinol + NAD(+) + 4 H(+)(out). In terms of biological role, NDH-1 shuttles electrons from NADH, via FMN and iron-sulfur (Fe-S) centers, to quinones in the respiratory chain. Couples the redox reaction to proton translocation (for every two electrons transferred, four hydrogen ions are translocated across the cytoplasmic membrane), and thus conserves the redox energy in a proton gradient. The protein is NADH-quinone oxidoreductase subunit B of Bordetella petrii (strain ATCC BAA-461 / DSM 12804 / CCUG 43448).